A 228-amino-acid chain; its full sequence is Thiamine-phosphate synthase (228 aa).

4-amino-2-methyl-5-(diphosphooxymethyl)pyrimidine-binding positions include 57-61 (QLRDK) and Asn89. Mg(2+) contacts are provided by Asp90 and Asp109. Residue Ser128 participates in 4-amino-2-methyl-5-(diphosphooxymethyl)pyrimidine binding. 154–156 (TPS) contributes to the 2-[(2R,5Z)-2-carboxy-4-methylthiazol-5(2H)-ylidene]ethyl phosphate binding site. Lys157 serves as a coordination point for 4-amino-2-methyl-5-(diphosphooxymethyl)pyrimidine. 2-[(2R,5Z)-2-carboxy-4-methylthiazol-5(2H)-ylidene]ethyl phosphate is bound by residues Gly185 and 205–206 (IS).

Belongs to the thiamine-phosphate synthase family. It depends on Mg(2+) as a cofactor.

It carries out the reaction 2-[(2R,5Z)-2-carboxy-4-methylthiazol-5(2H)-ylidene]ethyl phosphate + 4-amino-2-methyl-5-(diphosphooxymethyl)pyrimidine + 2 H(+) = thiamine phosphate + CO2 + diphosphate. It catalyses the reaction 2-(2-carboxy-4-methylthiazol-5-yl)ethyl phosphate + 4-amino-2-methyl-5-(diphosphooxymethyl)pyrimidine + 2 H(+) = thiamine phosphate + CO2 + diphosphate. The catalysed reaction is 4-methyl-5-(2-phosphooxyethyl)-thiazole + 4-amino-2-methyl-5-(diphosphooxymethyl)pyrimidine + H(+) = thiamine phosphate + diphosphate. Its pathway is cofactor biosynthesis; thiamine diphosphate biosynthesis; thiamine phosphate from 4-amino-2-methyl-5-diphosphomethylpyrimidine and 4-methyl-5-(2-phosphoethyl)-thiazole: step 1/1. Its function is as follows. Condenses 4-methyl-5-(beta-hydroxyethyl)thiazole monophosphate (THZ-P) and 2-methyl-4-amino-5-hydroxymethyl pyrimidine pyrophosphate (HMP-PP) to form thiamine monophosphate (TMP). The polypeptide is Thiamine-phosphate synthase (Roseiflexus castenholzii (strain DSM 13941 / HLO8)).